The chain runs to 174 residues: Shikimate kinase 2 (174 aa).

12–17 is an ATP binding site; sequence GCGKTT. Mg(2+) contacts are provided by Thr-16 and Asp-32. Substrate is bound by residues Asp-34, Arg-58, and Gly-79. Residues 112–126 are LID domain; the sequence is QAAPEEDLRPTLTGK. Arg-120 lines the ATP pocket. Arg-139 serves as a coordination point for substrate.

This sequence belongs to the shikimate kinase family. AroL subfamily. In terms of assembly, monomer. Requires Mg(2+) as cofactor.

The protein resides in the cytoplasm. It catalyses the reaction shikimate + ATP = 3-phosphoshikimate + ADP + H(+). It participates in metabolic intermediate biosynthesis; chorismate biosynthesis; chorismate from D-erythrose 4-phosphate and phosphoenolpyruvate: step 5/7. Its function is as follows. Catalyzes the specific phosphorylation of the 3-hydroxyl group of shikimic acid using ATP as a cosubstrate. The polypeptide is Shikimate kinase 2 (Escherichia coli O1:K1 / APEC).